The chain runs to 644 residues: Exoribonuclease 2 (644 aa).

The region spanning 190–516 (REDLTALDFI…INHRLLKALI (327 aa)) is the RNB domain. Positions 562–644 (DSRFAAEIID…ENRSVIARPV (83 aa)) constitute an S1 motif domain.

It belongs to the RNR ribonuclease family. RNase II subfamily.

It localises to the cytoplasm. The enzyme catalyses Exonucleolytic cleavage in the 3'- to 5'-direction to yield nucleoside 5'-phosphates.. Involved in mRNA degradation. Hydrolyzes single-stranded polyribonucleotides processively in the 3' to 5' direction. This is Exoribonuclease 2 from Sodalis glossinidius (strain morsitans).